The chain runs to 140 residues: Sex-regulated protein janus-B (140 aa).

Substrate is bound at residue R42. H69 (proton acceptor) is an active-site residue. 110 to 112 (CKT) is a substrate binding site.

The protein belongs to the janus family.

In terms of biological role, janA and janB regulate somatic sex differentiation. This chain is Sex-regulated protein janus-B (janB), found in Drosophila pseudoobscura pseudoobscura (Fruit fly).